The following is a 695-amino-acid chain: Potassium voltage-gated channel subfamily KQT member 4 (695 aa).

Residues M1–A21 are disordered. Topologically, residues M1–G96 are cytoplasmic. Position 93 (R93) interacts with a 1,2-diacyl-sn-glycero-3-phospho-(1D-myo-inositol-4,5-bisphosphate). A helical membrane pass occupies residues W97–L118. Topologically, residues S119–N129 are extracellular. A helical membrane pass occupies residues E130–W152. Residues S153–R168 are Cytoplasmic-facing. A helical membrane pass occupies residues F169 to A191. K172 provides a ligand contact to a 1,2-diacyl-sn-glycero-3-phospho-(1D-myo-inositol-4,5-bisphosphate). Topologically, residues G192–A202 are extracellular. A helical; Voltage-sensor membrane pass occupies residues L203–T223. The a 1,2-diacyl-sn-glycero-3-phospho-(1D-myo-inositol-4,5-bisphosphate) site is built by R219, R220, K225, and S235. The Cytoplasmic segment spans residues W224 to S235. A helical transmembrane segment spans residues K236 to L258. Over A259 to Y270 the chain is Extracellular. An intramembrane region (pore-forming) is located at residues A271 to H292. Position 293 (T293) is a topological domain, extracellular. A helical transmembrane segment spans residues W294–F322. Topologically, residues A323–D695 are cytoplasmic. H330 and K333 together coordinate a 1,2-diacyl-sn-glycero-3-phospho-(1D-myo-inositol-4,5-bisphosphate). The tract at residues A342–R351 is interaction with CALM. A disordered region spans residues R441 to W483. Composition is skewed to polar residues over residues M442–S452 and S464–W483. Positions R535–F549 are interaction with CALM. The tract at residues K546–A650 is C-terminal assembly domain (tetramerization). The segment at G588–E608 is disordered. Basic and acidic residues predominate over residues P591 to S605.

This sequence belongs to the potassium channel family. KQT (TC 1.A.1.15) subfamily. Kv7.4/KCNQ4 sub-subfamily. As to quaternary structure, homotetramer. Interacts (via C-terminus) with calmodulin; forms a heterooctameric structure (with 4:4 KCNQ1:CALM stoichiometry); the interaction is calcium-independent, constitutive, participates in the proper assembly of a functional channel. The interaction with calcium-free CALM controls channel trafficking whereas interaction with calcium-bound CALM regulates channel gating. May form a functional heteromultimeric channel with KCNQ3. Interacts with HSP90AB1; promotes cell surface expression of KCNQ4. Expressed in both the inner (IHCs) and the outer hair cells (OHCs) of the cochlea. Reciprocal longitudinal gradients of expression is present in IHCs and OHCs. The strongest expression in IHCs is in the base of the cochlea and in the apex for OHCs. A basal to apical gradient of expression is also present in both type I and type II spiral ganglion cells.

Its subcellular location is the basal cell membrane. The catalysed reaction is K(+)(in) = K(+)(out). Its activity is regulated as follows. Two molecules of phosphatidylinositol-4,5-bisphosphate (PIP2-I and PIP2-II) are essential to activate KCNQ4 channel by inducing the coupling of the voltage-sensing domain (VSD) and the pore-forming domain (PD). Upon channel activation, PIP2-I and PIP2-II disrupt the VSD-calmodulin/CALM interaction, causing the release of CALM from the VSD which triggers the opening of the gate. Calcium suppresses KCNQ4 channel current through calcium-bound CALM C-terminus. Therefore CALM acts as calcium sensor that controls channel activity. Functionally, pore-forming subunit of the voltage-gated potassium (Kv) channel involved in the regulation of sensory cells excitability in the cochlea. KCNQ4/Kv7.4 channel is composed of 4 pore-forming subunits assembled as tetramers. Promotes the outflow of potassium ions in the repolarization phase of action potential which plays a role in regulating membrane potential of excitable cells. The channel conducts a slowly activating and deactivating current. Current often shows some inward rectification at positive potentials. Channel may be selectively permeable in vitro to other cations besides potassium, in decreasing order of affinity K(+) = Rb(+) &gt; Cs(+) &gt; Na(+). Important for normal physiological function of inner ear such as sensory perception of sound. This chain is Potassium voltage-gated channel subfamily KQT member 4, found in Rattus norvegicus (Rat).